A 241-amino-acid chain; its full sequence is MNYEEITTTIPGPGVSQDDWNDEFQGCDCETQCSIENQCSCMTGATDNYSEDGRIVATSLLIECSTNCACCLLPYSCRNKVVQNGIKKKLKIFSTSEKGDGVLAEEPIQNREFVCEYAGECIGDQEVKRRCEVFKEEDNYTLTLKEHFGEKEVKTFIDPRLRGNIGRFLNHSCDPNCEIFVVRLGRMIPIAAIFAKREISVGEELSYDYGVSGIDGDNRKLCLCRSENCRKYLPMSVSPIE.

The Pre-SET domain maps to 25–85; it reads QGCDCETQCS…SCRNKVVQNG (61 aa). Residues Cys-27, Cys-29, Cys-33, Cys-39, Cys-41, Cys-64, Cys-68, Cys-70, and Cys-77 each contribute to the Zn(2+) site. The region spanning 88–210 is the SET domain; it reads KKLKIFSTSE…VGEELSYDYG (123 aa). S-adenosyl-L-methionine is bound by residues 98-100, Asp-138, Tyr-140, Arg-167, and 170-171; these read KGD and NH. Zn(2+) is bound by residues Cys-173, Cys-222, Cys-224, and Cys-229. The region spanning 218–234 is the Post-SET domain; sequence NRKLCLCRSENCRKYLP.

Belongs to the class V-like SAM-binding methyltransferase superfamily. Histone-lysine methyltransferase family. Suvar3-9 subfamily.

Its subcellular location is the nucleus. It localises to the chromosome. The enzyme catalyses L-lysyl-[histone] + S-adenosyl-L-methionine = N(6)-methyl-L-lysyl-[histone] + S-adenosyl-L-homocysteine + H(+). Its function is as follows. Probable histone methyltransferase required for embryonic development. The chain is Probable histone-lysine N-methyltransferase set-23 from Caenorhabditis briggsae.